A 133-amino-acid polypeptide reads, in one-letter code: T-cell receptor beta chain V region 86T1 (133 aa).

An N-terminal signal peptide occupies residues 1–21 (MSCRLLLYVSLCLVETALMNT). The interval 22-113 (KITQSPRYLI…SAVYFCASSH (92 aa)) is v segment. Residues Asn-36 and Asn-75 are each glycosylated (N-linked (GlcNAc...) asparagine). Residues Cys-41 and Cys-109 are joined by a disulfide bond. Residues 114–133 (GQGVSGNTLYFGEGSRLIVV) are j segment.

The chain is T-cell receptor beta chain V region 86T1 from Mus musculus (Mouse).